The chain runs to 195 residues: Molybdenum cofactor guanylyltransferase (195 aa).

GTP is bound by residues leucine 10 to glycine 12, lysine 23, asparagine 51, aspartate 69, and aspartate 99. Aspartate 99 is a Mg(2+) binding site.

This sequence belongs to the MobA family. As to quaternary structure, monomer. It depends on Mg(2+) as a cofactor.

The protein resides in the cytoplasm. The catalysed reaction is Mo-molybdopterin + GTP + H(+) = Mo-molybdopterin guanine dinucleotide + diphosphate. Functionally, transfers a GMP moiety from GTP to Mo-molybdopterin (Mo-MPT) cofactor (Moco or molybdenum cofactor) to form Mo-molybdopterin guanine dinucleotide (Mo-MGD) cofactor. In Shewanella putrefaciens (strain CN-32 / ATCC BAA-453), this protein is Molybdenum cofactor guanylyltransferase.